Reading from the N-terminus, the 783-residue chain is Cyclic di-GMP phosphodiesterase NbdA (783 aa).

An MHYT domain is found at 81 to 274 (YSPSLVALAF…FTGMAALVLS (194 aa)). 7 helical membrane-spanning segments follow: residues 84-104 (SLVA…LDMV), 120-140 (IGAF…MLAF), 150-170 (LPIT…TMYM), 176-196 (FGLL…AAMH), 215-235 (LFAL…AAVP), 255-275 (LLAG…VLSV), and 292-312 (LGWL…WAAW). At 313–783 (SEKQRERRLS…APPLRSLNQA (471 aa)) the chain is on the cytoplasmic side. Residues 375–507 (KGLAVMFLDL…GRNNAQFFSR (133 aa)) enclose the GGDEF domain. The region spanning 516–770 (ELQMEEELRQ…ALEEFLRAYR (255 aa)) is the EAL domain. Glutamine 537, glutamate 551, arginine 555, asparagine 610, and asparagine 615 together coordinate 3',3'-c-di-GMP. Glutamate 551 lines the Mg(2+) pocket. Asparagine 610 contributes to the Mg(2+) binding site. Mg(2+) contacts are provided by glutamate 642, aspartate 672, and aspartate 673. Aspartate 672 provides a ligand contact to 3',3'-c-di-GMP. 3',3'-c-di-GMP is bound at residue arginine 696. Glutamate 729 contributes to the Mg(2+) binding site. Positions 732 and 751 each coordinate 3',3'-c-di-GMP.

Mg(2+) is required as a cofactor.

Its subcellular location is the cell inner membrane. It carries out the reaction 3',3'-c-di-GMP + H2O = 5'-phosphoguanylyl(3'-&gt;5')guanosine + H(+). PDE activity is stimulated by GTP. It could also be stimulated by NO. Its function is as follows. Displays c-di-GMP-specific phosphodiesterase (PDE) activity. Seems to play a specific role in nitric oxide (NO)-induced biofilm dispersion. Enhanced NbdA synthesis in the presence of NO increases PDE activity, leading to reduced cellular c-di-GMP levels and biofilm dispersion. Does not show diguanylate cyclase (DGC) activity. The sequence is that of Cyclic di-GMP phosphodiesterase NbdA from Pseudomonas aeruginosa (strain ATCC 15692 / DSM 22644 / CIP 104116 / JCM 14847 / LMG 12228 / 1C / PRS 101 / PAO1).